The chain runs to 379 residues: Cobalt-precorrin-5B C(1)-methyltransferase (379 aa).

This sequence belongs to the CbiD family.

It carries out the reaction Co-precorrin-5B + S-adenosyl-L-methionine = Co-precorrin-6A + S-adenosyl-L-homocysteine. It participates in cofactor biosynthesis; adenosylcobalamin biosynthesis; cob(II)yrinate a,c-diamide from sirohydrochlorin (anaerobic route): step 6/10. Functionally, catalyzes the methylation of C-1 in cobalt-precorrin-5B to form cobalt-precorrin-6A. In Salmonella paratyphi A (strain ATCC 9150 / SARB42), this protein is Cobalt-precorrin-5B C(1)-methyltransferase.